Here is a 295-residue protein sequence, read N- to C-terminus: Protoheme IX farnesyltransferase (295 aa).

A run of 9 helical transmembrane segments spans residues 9–29, 36–56, 80–100, 108–128, 135–155, 163–183, 209–229, 230–250, and 265–285; these read ITKP…FFLA, FGVF…GCVF, LVSL…GVAL, LAAL…SLYL, GTLV…CAVT, LTLL…IAIF, IMLY…GGYA, GLNY…MAWK, and FVFS…DFQV.

It belongs to the UbiA prenyltransferase family. Protoheme IX farnesyltransferase subfamily.

It is found in the cell inner membrane. It catalyses the reaction heme b + (2E,6E)-farnesyl diphosphate + H2O = Fe(II)-heme o + diphosphate. Its pathway is porphyrin-containing compound metabolism; heme O biosynthesis; heme O from protoheme: step 1/1. In terms of biological role, converts heme B (protoheme IX) to heme O by substitution of the vinyl group on carbon 2 of heme B porphyrin ring with a hydroxyethyl farnesyl side group. This Pseudomonas savastanoi pv. phaseolicola (strain 1448A / Race 6) (Pseudomonas syringae pv. phaseolicola (strain 1448A / Race 6)) protein is Protoheme IX farnesyltransferase.